A 4115-amino-acid chain; its full sequence is Transcription-associated protein 1 (4115 aa).

Residues 1–11 (MDPSIPSTSHR) show a composition bias toward polar residues. 2 disordered regions span residues 1–21 (MDPS…GVQP) and 543–563 (ESEQ…KKTS). Basic and acidic residues predominate over residues 544 to 563 (SEQKRNELPTPTKEHTKKTS). 2 TPR repeats span residues 1341 to 1374 (LDGL…LLDL) and 1820 to 1853 (QDYD…EVIP). The segment at 2678–2701 (LEEPEPMEVDQPKNAPAEEPKDNK) is disordered. In terms of domain architecture, FAT spans 2808 to 3421 (LIEFISSKHE…SNGASKVSKS (614 aa)). A TPR 3 repeat occupies 2855 to 2888 (IETLESLGALYKELAEFDQYSAIWERRSVFPETM). In terms of domain architecture, PI3K/PI4K catalytic spans 3740–4100 (EPYFEIVMRG…CNSLIIRAKD (361 aa)). Residues 3746–3752 (VMRGGQV) form a G-loop region. The tract at residues 3959-3967 (NLSPMTPHQ) is catalytic loop. Positions 3979-4006 (NPFYRFELGTGQLMDIEHFAHEVPFRLT) are activation loop. The 33-residue stretch at 4083 to 4115 (DAKVKKDDCNSLIIRAKDSDNLSRMPPTYHAWF) folds into the FATC domain.

The protein belongs to the PI3/PI4-kinase family. TRA1 subfamily.

The protein localises to the nucleus. In terms of biological role, influences germ cell fate in hermaphrodites. Acts downstream of tra-2 and tra-3 and through the Tip60 histone acetyltransferase complex to regulate germ cell fate decisions. Required for spermatogenesis and embryonic development. Acts with tra-2 to promote expression of fog-3 and control male tail development. Involved in the negative regulation of vulval development. The protein is Transcription-associated protein 1 of Caenorhabditis briggsae.